We begin with the raw amino-acid sequence, 77 residues long: MMFTPLIVLTLLVLATAEHQCGPNEQWSGCPKCELQSGESDKPCATICGEPKCYCSPDKYRRIPDGRCIRKIQCPQH.

The signal sequence occupies residues 1-17; the sequence is MMFTPLIVLTLLVLATA. Disulfide bonds link Cys21/Cys53, Cys30/Cys48, Cys33/Cys44, and Cys55/Cys68. One can recognise a TIL domain in the interval 21 to 74; that stretch reads CGPNEQWSGCPKCELQSGESDKPCATICGEPKCYCSPDKYRRIPDGRCIRKIQC.

The protein localises to the secreted. Defends the organism against the host's proteinases. This chain is Serine protease inhibitor 3, found in Anisakis simplex (Herring worm).